The following is a 197-amino-acid chain: Putative protein N5-glutamine methyltransferase MJ0928 (197 aa).

Residues 42-46 (GVGTG), Asp-64, and Asn-105 each bind S-adenosyl-L-methionine. 105-108 (NPPY) provides a ligand contact to substrate.

It belongs to the eukaryotic/archaeal PrmC-related family.

It catalyses the reaction L-glutaminyl-[protein] + S-adenosyl-L-methionine = N(5)-methyl-L-glutaminyl-[protein] + S-adenosyl-L-homocysteine + H(+). Its function is as follows. Putative protein methyltransferase using S-adenosyl-L-methionine as the methyl donor. May methylate a Gln residue in target proteins. The chain is Putative protein N5-glutamine methyltransferase MJ0928 from Methanocaldococcus jannaschii (strain ATCC 43067 / DSM 2661 / JAL-1 / JCM 10045 / NBRC 100440) (Methanococcus jannaschii).